A 956-amino-acid chain; its full sequence is Lon protease homolog, mitochondrial 1 (956 aa).

Disordered stretches follow at residues 37–57 (NNNN…NNNN) and 83–123 (KKKG…GNEK). The segment covering 91–123 (NNDDNDNEKNEKNEKKVKNEKKEKNEKNDGNEK) has biased composition (basic and acidic residues). A Lon N-terminal domain is found at 159–357 (VVIYPSNSVN…MLYHMILNEQ (199 aa)). 511–518 (GPPGTGKT) is an ATP binding site. One can recognise a Lon proteolytic domain in the interval 747–945 (VTPIGVVNGL…KDVFEVAFPN (199 aa)). Low complexity predominate over residues 777–795 (KPLSSLPPSQQQQNQLEPS). Positions 777–800 (KPLSSLPPSQQQQNQLEPSIKTTG) are disordered. Active-site residues include S851 and K894.

This sequence belongs to the peptidase S16 family. In terms of assembly, homohexamer or homoheptamer. Organized in a ring with a central cavity.

The protein localises to the mitochondrion matrix. It catalyses the reaction Hydrolysis of proteins in presence of ATP.. Its function is as follows. ATP-dependent serine protease that mediates the selective degradation of misfolded, unassembled or oxidatively damaged polypeptides as well as certain short-lived regulatory proteins in the mitochondrial matrix. May also have a chaperone function in the assembly of inner membrane protein complexes. Participates in the regulation of mitochondrial gene expression and in the maintenance of the integrity of the mitochondrial genome. Binds to mitochondrial DNA in a site-specific manner. The sequence is that of Lon protease homolog, mitochondrial 1 from Dictyostelium discoideum (Social amoeba).